A 225-amino-acid chain; its full sequence is NAD(P)H-quinone oxidoreductase subunit K, chloroplastic (225 aa).

Positions 43, 44, 108, and 139 each coordinate [4Fe-4S] cluster.

This sequence belongs to the complex I 20 kDa subunit family. NDH is composed of at least 16 different subunits, 5 of which are encoded in the nucleus. The cofactor is [4Fe-4S] cluster.

The protein localises to the plastid. The protein resides in the chloroplast thylakoid membrane. It carries out the reaction a plastoquinone + NADH + (n+1) H(+)(in) = a plastoquinol + NAD(+) + n H(+)(out). The catalysed reaction is a plastoquinone + NADPH + (n+1) H(+)(in) = a plastoquinol + NADP(+) + n H(+)(out). Functionally, NDH shuttles electrons from NAD(P)H:plastoquinone, via FMN and iron-sulfur (Fe-S) centers, to quinones in the photosynthetic chain and possibly in a chloroplast respiratory chain. The immediate electron acceptor for the enzyme in this species is believed to be plastoquinone. Couples the redox reaction to proton translocation, and thus conserves the redox energy in a proton gradient. The protein is NAD(P)H-quinone oxidoreductase subunit K, chloroplastic of Barbarea verna (Land cress).